A 68-amino-acid chain; its full sequence is Riparin-1.6 (68 aa).

An N-terminal signal peptide occupies residues 1–15 (MKIIVFLAVLMLVSA). Positions 16-41 (QVCLVSAAEMEHSSDNELSSRDLVKR) are excised as a propeptide. Cys-47 and Cys-53 are oxidised to a cystine. The residue at position 53 (Cys-53) is a Cysteine amide. Positions 57–68 (DIESSEGANGGE) are excised as a propeptide.

As to expression, expressed by the skin glands.

The protein resides in the secreted. This chain is Riparin-1.6, found in Crinia riparia (Streambank froglet).